The chain runs to 456 residues: Bifunctional protein GlmU (456 aa).

The interval 1–229 (MTKKALSAVI…VMEVEGANNR (229 aa)) is pyrophosphorylase. Residues 11–14 (LAAG), Lys-25, Gln-76, 81–82 (GT), 103–105 (YGD), Gly-140, Glu-154, Asn-169, and Asn-227 each bind UDP-N-acetyl-alpha-D-glucosamine. Residue Asp-105 participates in Mg(2+) binding. Asn-227 serves as a coordination point for Mg(2+). The interval 230-250 (LQLAALERYFQNKQASKLLLE) is linker. Residues 251-456 (GVMIYDPARF…QGWQRPIKKK (206 aa)) form an N-acetyltransferase region. Positions 333 and 351 each coordinate UDP-N-acetyl-alpha-D-glucosamine. His-363 functions as the Proton acceptor in the catalytic mechanism. The UDP-N-acetyl-alpha-D-glucosamine site is built by Tyr-366 and Asn-377. Acetyl-CoA-binding positions include Ala-380, 386–387 (NY), Ser-405, Ala-423, and Arg-440.

In the N-terminal section; belongs to the N-acetylglucosamine-1-phosphate uridyltransferase family. The protein in the C-terminal section; belongs to the transferase hexapeptide repeat family. In terms of assembly, homotrimer. The cofactor is Mg(2+).

The protein localises to the cytoplasm. It catalyses the reaction alpha-D-glucosamine 1-phosphate + acetyl-CoA = N-acetyl-alpha-D-glucosamine 1-phosphate + CoA + H(+). The catalysed reaction is N-acetyl-alpha-D-glucosamine 1-phosphate + UTP + H(+) = UDP-N-acetyl-alpha-D-glucosamine + diphosphate. The protein operates within nucleotide-sugar biosynthesis; UDP-N-acetyl-alpha-D-glucosamine biosynthesis; N-acetyl-alpha-D-glucosamine 1-phosphate from alpha-D-glucosamine 6-phosphate (route II): step 2/2. Its pathway is nucleotide-sugar biosynthesis; UDP-N-acetyl-alpha-D-glucosamine biosynthesis; UDP-N-acetyl-alpha-D-glucosamine from N-acetyl-alpha-D-glucosamine 1-phosphate: step 1/1. It functions in the pathway bacterial outer membrane biogenesis; LPS lipid A biosynthesis. Catalyzes the last two sequential reactions in the de novo biosynthetic pathway for UDP-N-acetylglucosamine (UDP-GlcNAc). The C-terminal domain catalyzes the transfer of acetyl group from acetyl coenzyme A to glucosamine-1-phosphate (GlcN-1-P) to produce N-acetylglucosamine-1-phosphate (GlcNAc-1-P), which is converted into UDP-GlcNAc by the transfer of uridine 5-monophosphate (from uridine 5-triphosphate), a reaction catalyzed by the N-terminal domain. The protein is Bifunctional protein GlmU of Haemophilus influenzae (strain 86-028NP).